The chain runs to 296 residues: Pantothenate synthetase (296 aa).

31–38 (MGYLHEGH) provides a ligand contact to ATP. Residue His38 is the Proton donor of the active site. Gln62 is a (R)-pantoate binding site. Residue Gln62 participates in beta-alanine binding. An ATP-binding site is contributed by 148 to 151 (GEKD). Gln154 contacts (R)-pantoate. Residues Val177 and 185–188 (LSSR) contribute to the ATP site.

The protein belongs to the pantothenate synthetase family. Homodimer.

Its subcellular location is the cytoplasm. It catalyses the reaction (R)-pantoate + beta-alanine + ATP = (R)-pantothenate + AMP + diphosphate + H(+). It functions in the pathway cofactor biosynthesis; (R)-pantothenate biosynthesis; (R)-pantothenate from (R)-pantoate and beta-alanine: step 1/1. Its function is as follows. Catalyzes the condensation of pantoate with beta-alanine in an ATP-dependent reaction via a pantoyl-adenylate intermediate. The sequence is that of Pantothenate synthetase from Deinococcus geothermalis (strain DSM 11300 / CIP 105573 / AG-3a).